Here is a 634-residue protein sequence, read N- to C-terminus: MMRTWMVYVVGLVGELYGSQVEETREMREMKEALERLFSRRLSDSEIEMVESLENGGNFETRVLVPVIFHKDKVVVSPAARYRDIEKEERVYVEEVIRRLRSLVWHSMVYIYVPKNNDWIMDLICKVSGMSSPQRLDDVALYKDTGGNCGMKFVDLVNKMFKQNADMLKKFGDLLSNGAETRILELPDSLSEDERRREVEMLQRVKEYGKMLCTEDKQKEIVEAQKIMCDACEQIWRREEDRKEFTMEIYSRYLNMKVMRGGVERDVEDPLIDHMDHYMLISTHKKYKCMDVVAELVRKVFVEDKDIEDSDVMSAVCSVRERKRLEEMREMEERKRKEEERAKNEEELLRMVEREEREKREESKGRGKKKRGNRGAGESKEESKGRGKRKRGNKGAGESKEEDRGEEGGVEAEDPLEEMAVGEAWRKKKGSGEKRISEEHHYKVHSRVLRWKKDAGEIKRELDEGYEKKWKNRSIEEIKEQKKVHDIVEVMKLLRDKEKCDRFFVRTGKYMKGKSERWKMVANGILEEGGEKKVGKVEVGLFKGEGGESVVYHLMFRPTETERTGRVGGSSFGKYDDVDEIKKEKSSDMFGFRYPSGVRCEMTSNRNEFRIEYRNRKNTSEVLRTLTILRIPET.

Composition is skewed to basic and acidic residues over residues 354 to 365 (REEREKREESKG) and 397 to 407 (GESKEEDRGEE). Positions 354–438 (REEREKREES…KGSGEKRISE (85 aa)) are disordered. A compositionally biased stretch (acidic residues) spans 408 to 417 (GGVEAEDPLE).

It belongs to the UPF0329 family.

The chain is UPF0329 protein ECU11_2090 from Encephalitozoon cuniculi (strain GB-M1) (Microsporidian parasite).